A 121-amino-acid chain; its full sequence is uncharacterized protein (121 aa).

Disordered stretches follow at residues 24-43 (SGRTGGQRKGASLARPGRGG) and 100-121 (DHENSQNNSKRRCKVNCETDQR).

This is an uncharacterized protein from Homo sapiens (Human).